The chain runs to 175 residues: Translation initiation factor IF-3 (175 aa).

This sequence belongs to the IF-3 family. As to quaternary structure, monomer.

It localises to the cytoplasm. IF-3 binds to the 30S ribosomal subunit and shifts the equilibrium between 70S ribosomes and their 50S and 30S subunits in favor of the free subunits, thus enhancing the availability of 30S subunits on which protein synthesis initiation begins. This Staphylococcus aureus (strain USA300) protein is Translation initiation factor IF-3.